Consider the following 256-residue polypeptide: Ribonuclease 3 (256 aa).

Residues 6 to 128 (LATLETRLDH…LFGAVFLDAG (123 aa)) enclose the RNase III domain. A Mg(2+)-binding site is contributed by Glu-41. The active site involves Asp-45. Residues Asp-114 and Glu-117 each contribute to the Mg(2+) site. The active site involves Glu-117. Residues 155-225 (DAKTLLQEFL…AKVALEAAQA (71 aa)) enclose the DRBM domain.

This sequence belongs to the ribonuclease III family. Homodimer. The cofactor is Mg(2+).

The protein localises to the cytoplasm. It carries out the reaction Endonucleolytic cleavage to 5'-phosphomonoester.. Digests double-stranded RNA. Involved in the processing of primary rRNA transcript to yield the immediate precursors to the large and small rRNAs (23S and 16S). Processes some mRNAs, and tRNAs when they are encoded in the rRNA operon. Processes pre-crRNA and tracrRNA of type II CRISPR loci if present in the organism. The polypeptide is Ribonuclease 3 (Bordetella bronchiseptica (strain ATCC BAA-588 / NCTC 13252 / RB50) (Alcaligenes bronchisepticus)).